The sequence spans 314 residues: DNA-directed RNA polymerase subunit alpha (314 aa).

The segment at 1–228 (MIEFEKPNIH…EHLAMFVDLT (228 aa)) is alpha N-terminal domain (alpha-NTD). The alpha C-terminal domain (alpha-CTD) stretch occupies residues 245–314 (KEKMLEMTIE…DLGVSFRQDD (70 aa)).

It belongs to the RNA polymerase alpha chain family. In terms of assembly, homodimer. The RNAP catalytic core consists of 2 alpha, 1 beta, 1 beta' and 1 omega subunit. When a sigma factor is associated with the core the holoenzyme is formed, which can initiate transcription.

The enzyme catalyses RNA(n) + a ribonucleoside 5'-triphosphate = RNA(n+1) + diphosphate. In terms of biological role, DNA-dependent RNA polymerase catalyzes the transcription of DNA into RNA using the four ribonucleoside triphosphates as substrates. The protein is DNA-directed RNA polymerase subunit alpha of Limosilactobacillus reuteri (strain DSM 20016) (Lactobacillus reuteri).